A 557-amino-acid polypeptide reads, in one-letter code: TWiK family of potassium channels protein 7 (557 aa).

2 disordered regions span residues 1–34 and 128–151; these read MTSS…EALL and DKSG…EEEE. Over 1–165 the chain is Cytoplasmic; sequence MTSSSRGYQR…RKFAKLVLPH (165 aa). Positions 134-151 are enriched in acidic residues; sequence DIDDESDDESKDEDEEEE. Residues 166–186 form a helical membrane-spanning segment; sequence VALVLLTCTYTVIGALIFYSV. N-linked (GlcNAc...) asparagine glycans are attached at residues N220 and N237. Positions 270-290 form an intramembrane region, pore-forming; that stretch reads SIFFAVTVVTTIGYGNPVPVT. Residues 295–315 traverse the membrane as a helical segment; the sequence is IWCILFSLLGIPLTLVTIADL. The Cytoplasmic portion of the chain corresponds to 316–368; sequence GKFLSEHLVWLYGNYLKLKYLILSRHRKERREHVCEHCHSHGMGHDMNIEEKR. Residues 369–389 form a helical membrane-spanning segment; it reads IPAFLVLAILIVYTAFGGVLM. An intramembrane region (pore-forming) is located at residues 397–417; it reads FFTSFYWSFITMTTVGFGDLM. A helical transmembrane segment spans residues 426–446; it reads IILLYIILGLAITTMCIDLVG. Topologically, residues 447–557 are cytoplasmic; that stretch reads VQYIRKIHYF…SRYSLNRAFK (111 aa).

Belongs to the two pore domain potassium channel (TC 1.A.1.8) family.

The protein resides in the membrane. In Caenorhabditis elegans, this protein is TWiK family of potassium channels protein 7 (twk-7).